We begin with the raw amino-acid sequence, 292 residues long: Bifunctional protein FolD 2 (292 aa).

NADP(+)-binding positions include 166 to 168 and Ile-232; that span reads GHS.

The protein belongs to the tetrahydrofolate dehydrogenase/cyclohydrolase family. Homodimer.

It catalyses the reaction (6R)-5,10-methylene-5,6,7,8-tetrahydrofolate + NADP(+) = (6R)-5,10-methenyltetrahydrofolate + NADPH. It carries out the reaction (6R)-5,10-methenyltetrahydrofolate + H2O = (6R)-10-formyltetrahydrofolate + H(+). Its pathway is one-carbon metabolism; tetrahydrofolate interconversion. Functionally, catalyzes the oxidation of 5,10-methylenetetrahydrofolate to 5,10-methenyltetrahydrofolate and then the hydrolysis of 5,10-methenyltetrahydrofolate to 10-formyltetrahydrofolate. This is Bifunctional protein FolD 2 from Ruegeria pomeroyi (strain ATCC 700808 / DSM 15171 / DSS-3) (Silicibacter pomeroyi).